The primary structure comprises 380 residues: Cytochrome b (380 aa).

Transmembrane regions (helical) follow at residues 34 to 54 (FGSLLGICLLTQILTGLLLAM), 78 to 99 (WLIRNLHANGASFFFICIYLHI), 114 to 134 (WNTGVILLLTLMATAFVGYVL), and 179 to 199 (FFALHFLLPFMITGLTTIHLT). The heme b site is built by His-84 and His-98. Residues His-183 and His-197 each coordinate heme b. Residue His-202 participates in a ubiquinone binding. Helical transmembrane passes span 227–247 (LKDFLGFTLMLLPLTTLALFS), 289–309 (LGGVLALAASVLILFLAPFLH), 321–341 (ISQLLFWILVTNLLILTWVGS), and 348–368 (FIIIGQLASITYFTILLILFP).

This sequence belongs to the cytochrome b family. In terms of assembly, the cytochrome bc1 complex contains 11 subunits: 3 respiratory subunits (MT-CYB, CYC1 and UQCRFS1), 2 core proteins (UQCRC1 and UQCRC2) and 6 low-molecular weight proteins (UQCRH/QCR6, UQCRB/QCR7, UQCRQ/QCR8, UQCR10/QCR9, UQCR11/QCR10 and a cleavage product of UQCRFS1). This cytochrome bc1 complex then forms a dimer. It depends on heme b as a cofactor.

The protein localises to the mitochondrion inner membrane. Its function is as follows. Component of the ubiquinol-cytochrome c reductase complex (complex III or cytochrome b-c1 complex) that is part of the mitochondrial respiratory chain. The b-c1 complex mediates electron transfer from ubiquinol to cytochrome c. Contributes to the generation of a proton gradient across the mitochondrial membrane that is then used for ATP synthesis. This Pelecanoides urinatrix (Common diving petrel) protein is Cytochrome b (MT-CYB).